The following is a 103-amino-acid chain: Histone H4 (103 aa).

Gly residues predominate over residues 1–14 (MSGRGKGGKGLGKG). Residues 1–20 (MSGRGKGGKGLGKGGAKRHR) form a disordered region. Position 6 is an N6-acetyl-N6-methyllysine; alternate (Lys6). Lys6, Lys9, and Lys13 each carry N6-methyllysine; alternate. Lys13 carries the N6-acetyl-N6-methyllysine; alternate modification. The DNA-binding element occupies 17–21 (KRHRK). Lys92 is subject to N6-glutaryllysine.

Belongs to the histone H4 family. The nucleosome is a histone octamer containing two molecules each of H2A, H2B, H3 and H4 assembled in one H3-H4 heterotetramer and two H2A-H2B heterodimers. The octamer wraps approximately 147 bp of DNA. In terms of processing, glutarylation at Lys-92 (H4K91glu) destabilizes nucleosomes by promoting dissociation of the H2A-H2B dimers from nucleosomes.

The protein localises to the nucleus. It is found in the chromosome. Its function is as follows. Core component of nucleosome. Nucleosomes wrap and compact DNA into chromatin, limiting DNA accessibility to the cellular machineries which require DNA as a template. Histones thereby play a central role in transcription regulation, DNA repair, DNA replication and chromosomal stability. DNA accessibility is regulated via a complex set of post-translational modifications of histones, also called histone code, and nucleosome remodeling. The protein is Histone H4 (HHF1) of Candida glabrata (strain ATCC 2001 / BCRC 20586 / JCM 3761 / NBRC 0622 / NRRL Y-65 / CBS 138) (Yeast).